Consider the following 2188-residue polypeptide: Glutamate synthase 2 [NADH], chloroplastic (2188 aa).

The transit peptide at 1 to 30 (MSAAQGLALKLRAAPAAGGVRGEKRRRAAS) directs the protein to the chloroplast. Disordered regions lie at residues 14–40 (APAAGGVRGEKRRRAASATAAAAARPR) and 61–94 (VAPRASASRQAEAGAGAGAARPPPRSMSKIPESS). Residues 65–80 (ASASRQAEAGAGAGAA) are compositionally biased toward low complexity. Cysteine 107 (nucleophile) is an active-site residue. The region spanning 107 to 511 (CGVGFIAELS…PGMMLLVDFE (405 aa)) is the Glutamine amidotransferase type-2 domain. 1198-1255 (LAETHQTLVANGLRGRAVLQTDGQMKTGRDVAVACLLGAEEFGFSTAPLITLGCIMMR) serves as a coordination point for FMN. Positions 1251, 1257, and 1262 each coordinate [3Fe-4S] cluster. 1974-1988 (GGGDTGTDCIGTSIR) contacts NAD(+).

It belongs to the glutamate synthase family. In terms of assembly, monomer. [3Fe-4S] cluster is required as a cofactor. It depends on FAD as a cofactor. Requires FMN as cofactor. In terms of tissue distribution, expressed in leaf blades and sheaths.

The protein resides in the plastid. The protein localises to the chloroplast. The enzyme catalyses 2 L-glutamate + NAD(+) = L-glutamine + 2-oxoglutarate + NADH + H(+). Its pathway is amino-acid biosynthesis; L-glutamate biosynthesis via GLT pathway; L-glutamate from 2-oxoglutarate and L-glutamine (NAD(+) route): step 1/1. The protein operates within energy metabolism; nitrogen metabolism. Involved in glutamate biosynthesis. The protein is Glutamate synthase 2 [NADH], chloroplastic of Oryza sativa subsp. japonica (Rice).